The following is a 249-amino-acid chain: Probable septum site-determining protein MinC (249 aa).

A disordered region spans residues 115 to 144 (PTAVSPPPPPPPPPARAEPAPPAARPAPGR). Positions 118–139 (VSPPPPPPPPPARAEPAPPAAR) are enriched in pro residues.

This sequence belongs to the MinC family. As to quaternary structure, interacts with MinD and FtsZ.

Its function is as follows. Cell division inhibitor that blocks the formation of polar Z ring septums. Rapidly oscillates between the poles of the cell to destabilize FtsZ filaments that have formed before they mature into polar Z rings. Prevents FtsZ polymerization. In Xanthomonas axonopodis pv. citri (strain 306), this protein is Probable septum site-determining protein MinC.